Here is a 197-residue protein sequence, read N- to C-terminus: 3-isopropylmalate dehydratase small subunit (197 aa).

The protein belongs to the LeuD family. LeuD type 1 subfamily. As to quaternary structure, heterodimer of LeuC and LeuD.

It carries out the reaction (2R,3S)-3-isopropylmalate = (2S)-2-isopropylmalate. It functions in the pathway amino-acid biosynthesis; L-leucine biosynthesis; L-leucine from 3-methyl-2-oxobutanoate: step 2/4. Catalyzes the isomerization between 2-isopropylmalate and 3-isopropylmalate, via the formation of 2-isopropylmaleate. This chain is 3-isopropylmalate dehydratase small subunit, found in Streptococcus suis (strain 98HAH33).